Consider the following 316-residue polypeptide: Pantothenate kinase (316 aa).

95 to 102 lines the ATP pocket; sequence GSVAVGKS.

The protein belongs to the prokaryotic pantothenate kinase family.

It is found in the cytoplasm. The catalysed reaction is (R)-pantothenate + ATP = (R)-4'-phosphopantothenate + ADP + H(+). Its pathway is cofactor biosynthesis; coenzyme A biosynthesis; CoA from (R)-pantothenate: step 1/5. This Klebsiella pneumoniae subsp. pneumoniae (strain ATCC 700721 / MGH 78578) protein is Pantothenate kinase.